Consider the following 220-residue polypeptide: Iron-sulfur flavoprotein AF_1436 (220 aa).

Positions 47, 50, 53, and 59 each coordinate [4Fe-4S] cluster.

Belongs to the SsuE family. Isf subfamily. Homodimer. FMN serves as cofactor. [4Fe-4S] cluster is required as a cofactor.

Functionally, redox-active protein probably involved in electron transport. This chain is Iron-sulfur flavoprotein AF_1436, found in Archaeoglobus fulgidus (strain ATCC 49558 / DSM 4304 / JCM 9628 / NBRC 100126 / VC-16).